The chain runs to 269 residues: Pertussis toxin subunit 1 homolog (269 aa).

Positions 1–34 are cleaved as a signal peptide; the sequence is MRCTRAIRQTARTGWLTWLAILAVTAPMTSPAWA.

It belongs to the bacterial exotoxin subunit A family.

This Bordetella parapertussis (strain 12822 / ATCC BAA-587 / NCTC 13253) protein is Pertussis toxin subunit 1 homolog (ptxA).